The following is a 453-amino-acid chain: 3-phosphoshikimate 1-carboxyvinyltransferase (453 aa).

3-phosphoshikimate-binding residues include Lys28, Ser29, and Arg33. Position 28 (Lys28) interacts with phosphoenolpyruvate. 2 residues coordinate phosphoenolpyruvate: Gly101 and Arg129. 3-phosphoshikimate-binding residues include Ser174, Gln176, Asp326, and Lys353. Gln176 contacts phosphoenolpyruvate. Asp326 (proton acceptor) is an active-site residue. Residues Arg357 and Arg405 each coordinate phosphoenolpyruvate.

The protein belongs to the EPSP synthase family. Monomer.

Its subcellular location is the cytoplasm. The enzyme catalyses 3-phosphoshikimate + phosphoenolpyruvate = 5-O-(1-carboxyvinyl)-3-phosphoshikimate + phosphate. Its pathway is metabolic intermediate biosynthesis; chorismate biosynthesis; chorismate from D-erythrose 4-phosphate and phosphoenolpyruvate: step 6/7. In terms of biological role, catalyzes the transfer of the enolpyruvyl moiety of phosphoenolpyruvate (PEP) to the 5-hydroxyl of shikimate-3-phosphate (S3P) to produce enolpyruvyl shikimate-3-phosphate and inorganic phosphate. The polypeptide is 3-phosphoshikimate 1-carboxyvinyltransferase (Zymomonas mobilis subsp. mobilis (strain ATCC 31821 / ZM4 / CP4)).